A 1274-amino-acid chain; its full sequence is ABC multidrug transporter E (1274 aa).

Asparagine 48 is a glycosylation site (N-linked (GlcNAc...) asparagine). One can recognise an ABC transmembrane type-1 1 domain in the interval 120 to 344; the sequence is FCFRVTGLRV…IASPLIIVSK (225 aa). Transmembrane regions (helical) follow at residues 183–203, 205–225, 280–300, and 321–341; these read LALL…LTLV, SSAL…MTKI, IFGI…SLAF, and VFFS…PLII. Residues 377–629 form the ABC transporter 1 domain; the sequence is IIFRDVRFTY…EGGVYRDLVN (253 aa). 412-419 contributes to the ATP binding site; sequence GPSGSGKS. N-linked (GlcNAc...) asparagine glycans are attached at residues asparagine 473 and asparagine 580. 2 consecutive transmembrane segments (helical) span residues 697–717 and 737–757; these read VAVL…SWLF and FWAL…STVG. One can recognise an ABC transmembrane type-1 2 domain in the interval 697 to 984; the sequence is VAVLISTAGA…FFSFASNFAQ (288 aa). Asparagine 792 carries N-linked (GlcNAc...) asparagine glycosylation. The next 3 membrane-spanning stretches (helical) occupy residues 818–838, 840–860, and 924–944; these read FPLI…SFGW, LSLV…FMRI, and LIFA…FWYG. The ABC transporter 2 domain maps to 1023-1269; that stretch reads VEFHDVSFRY…KGTYWQMVSS (247 aa). Residue asparagine 1044 is glycosylated (N-linked (GlcNAc...) asparagine). Position 1057 to 1064 (1057 to 1064) interacts with ATP; sequence GPSGCGKT. The N-linked (GlcNAc...) asparagine glycan is linked to asparagine 1117.

Belongs to the ABC transporter superfamily. ABCB family. Multidrug resistance exporter (TC 3.A.1.201) subfamily.

The protein resides in the cell membrane. Pleiotropic ABC efflux transporter that may be involved in A.fumigatus adaptation to azoles such as vorizonazole. The chain is ABC multidrug transporter E from Aspergillus fumigatus (strain ATCC MYA-4609 / CBS 101355 / FGSC A1100 / Af293) (Neosartorya fumigata).